Reading from the N-terminus, the 65-residue chain is Sodium channel neurotoxin MeuNaTxalpha-9 (65 aa).

The LCN-type CS-alpha/beta domain occupies arginine 2 to arginine 64. 4 disulfide bridges follow: cysteine 12–cysteine 63, cysteine 16–cysteine 36, cysteine 22–cysteine 46, and cysteine 26–cysteine 48. Arginine 64 carries the post-translational modification Arginine amide.

The protein belongs to the long (4 C-C) scorpion toxin superfamily. Sodium channel inhibitor family. Alpha subfamily. In terms of tissue distribution, expressed by the venom gland.

The protein resides in the secreted. In terms of biological role, alpha toxins bind voltage-independently at site-3 of sodium channels (Nav) and inhibit the inactivation of the activated channels, thereby blocking neuronal transmission. The sequence is that of Sodium channel neurotoxin MeuNaTxalpha-9 from Mesobuthus eupeus (Lesser Asian scorpion).